The chain runs to 231 residues: ATP phosphoribosyltransferase (231 aa).

It belongs to the ATP phosphoribosyltransferase family. Short subfamily. Heteromultimer composed of HisG and HisZ subunits.

It localises to the cytoplasm. The enzyme catalyses 1-(5-phospho-beta-D-ribosyl)-ATP + diphosphate = 5-phospho-alpha-D-ribose 1-diphosphate + ATP. It functions in the pathway amino-acid biosynthesis; L-histidine biosynthesis; L-histidine from 5-phospho-alpha-D-ribose 1-diphosphate: step 1/9. Functionally, catalyzes the condensation of ATP and 5-phosphoribose 1-diphosphate to form N'-(5'-phosphoribosyl)-ATP (PR-ATP). Has a crucial role in the pathway because the rate of histidine biosynthesis seems to be controlled primarily by regulation of HisG enzymatic activity. The chain is ATP phosphoribosyltransferase (hisG) from Rhizobium etli (strain CIAT 652).